The sequence spans 23 residues: Dermaseptin-4 (23 aa).

Glutamine amide is present on Q23.

In terms of tissue distribution, expressed by the skin glands.

It is found in the secreted. In terms of biological role, antimicrobial peptide, active against the Gram-positive bacterium S.aureus, and the Gram-negative bacteria E.coli and P.aeruginosa. Has hemolytic activity (5% hemolysis at 128 ug/ml). The chain is Dermaseptin-4 from Phyllomedusa tarsius (Brownbelly leaf frog).